We begin with the raw amino-acid sequence, 743 residues long: Serine/threonine-protein kinase GD17699 (743 aa).

The segment at Asn54 to Glu78 is disordered. Doublecortin domains are found at residues Leu154–Asn240 and Arg309–Phe392. Positions Tyr473–Thr731 constitute a Protein kinase domain. Residues Ile479–Val487 and Lys502 each bind ATP. Asp594 serves as the catalytic Proton acceptor.

This sequence belongs to the protein kinase superfamily. CAMK Ser/Thr protein kinase family. CaMK subfamily.

The enzyme catalyses L-seryl-[protein] + ATP = O-phospho-L-seryl-[protein] + ADP + H(+). It catalyses the reaction L-threonyl-[protein] + ATP = O-phospho-L-threonyl-[protein] + ADP + H(+). The chain is Serine/threonine-protein kinase GD17699 from Drosophila simulans (Fruit fly).